The primary structure comprises 186 residues: Glycerol-3-phosphate acyltransferase 1 (186 aa).

Transmembrane regions (helical) follow at residues 9-29 (MQFLYLVASYLFGNILTAYIV), 58-78 (GYFVATFLGDAIKGAIVVSIA), 85-105 (STFVMLTLLAVIIGHIYPVLF), 121-141 (IAFDYLIALTLVAVFIIFYLI), and 161-181 (ILYSYSIVTTILSALIIVLIL).

This sequence belongs to the PlsY family. As to quaternary structure, probably interacts with PlsX.

Its subcellular location is the cell membrane. The enzyme catalyses an acyl phosphate + sn-glycerol 3-phosphate = a 1-acyl-sn-glycero-3-phosphate + phosphate. Its pathway is lipid metabolism; phospholipid metabolism. Catalyzes the transfer of an acyl group from acyl-phosphate (acyl-PO(4)) to glycerol-3-phosphate (G3P) to form lysophosphatidic acid (LPA). This enzyme utilizes acyl-phosphate as fatty acyl donor, but not acyl-CoA or acyl-ACP. This is Glycerol-3-phosphate acyltransferase 1 from Bacillus cereus (strain ZK / E33L).